We begin with the raw amino-acid sequence, 187 residues long: dCTP deaminase (187 aa).

Residues 110 to 115 (KSTYAR), 134 to 136 (TLE), glutamine 155, tyrosine 169, and glutamine 179 each bind dCTP. Residue glutamate 136 is the Proton donor/acceptor of the active site.

Belongs to the dCTP deaminase family. Homotrimer.

It carries out the reaction dCTP + H2O + H(+) = dUTP + NH4(+). It participates in pyrimidine metabolism; dUMP biosynthesis; dUMP from dCTP (dUTP route): step 1/2. Functionally, catalyzes the deamination of dCTP to dUTP. The sequence is that of dCTP deaminase from Bordetella petrii (strain ATCC BAA-461 / DSM 12804 / CCUG 43448).